We begin with the raw amino-acid sequence, 182 residues long: Small ribosomal subunit protein uS4c (182 aa).

The interval 12 to 31 (PGFTSKRPRSGSDLKNPLRS) is disordered. One can recognise an S4 RNA-binding domain in the interval 82–143 (MRLDNILFRL…KQRSKALIQN (62 aa)).

It belongs to the universal ribosomal protein uS4 family. As to quaternary structure, part of the 30S ribosomal subunit. Contacts protein S5. The interaction surface between S4 and S5 is involved in control of translational fidelity.

Its subcellular location is the plastid. It localises to the chloroplast. Functionally, one of the primary rRNA binding proteins, it binds directly to 16S rRNA where it nucleates assembly of the body of the 30S subunit. With S5 and S12 plays an important role in translational accuracy. This is Small ribosomal subunit protein uS4c (rps4) from Hymenocallis littoralis (Beach spider-lily).